Consider the following 349-residue polypeptide: Ion-translocating oxidoreductase complex subunit D (349 aa).

The next 4 membrane-spanning stretches (helical) occupy residues 20 to 40 (IMFL…YFFG), 42 to 62 (GVLI…IIIL), 83 to 105 (VLLG…CFFA), and 120 to 140 (IFNP…VHMT). T184 carries the post-translational modification FMN phosphoryl threonine. 5 consecutive transmembrane segments (helical) span residues 212–232 (IVSI…CFLL), 236–256 (VICW…SSIT), 263–283 (FFCS…AFFI), 291–311 (SCTK…VWII), and 319–339 (DGIA…DAYL).

The protein belongs to the NqrB/RnfD family. The complex is composed of six subunits: RnfA, RnfB, RnfC, RnfD, RnfE and RnfG. FMN serves as cofactor.

The protein localises to the cell inner membrane. Functionally, part of a membrane-bound complex that couples electron transfer with translocation of ions across the membrane. This Buchnera aphidicola subsp. Schizaphis graminum (strain Sg) protein is Ion-translocating oxidoreductase complex subunit D.